A 249-amino-acid chain; its full sequence is Isoprenyl transferase (249 aa).

The active site involves Asp25. Residue Asp25 participates in Mg(2+) binding. Substrate-binding positions include 26–29 (GNGR), Trp30, Arg38, His42, and 70–72 (STE). Asn73 serves as the catalytic Proton acceptor. Residues Trp74, Arg76, Arg197, and 203–205 (RLS) each bind substrate. Glu216 provides a ligand contact to Mg(2+).

It belongs to the UPP synthase family. In terms of assembly, homodimer. Mg(2+) serves as cofactor.

Catalyzes the condensation of isopentenyl diphosphate (IPP) with allylic pyrophosphates generating different type of terpenoids. This chain is Isoprenyl transferase, found in Streptococcus thermophilus (strain CNRZ 1066).